A 472-amino-acid polypeptide reads, in one-letter code: Aspartyl/glutamyl-tRNA(Asn/Gln) amidotransferase subunit B (472 aa).

This sequence belongs to the GatB/GatE family. GatB subfamily. Heterotrimer of A, B and C subunits.

The catalysed reaction is L-glutamyl-tRNA(Gln) + L-glutamine + ATP + H2O = L-glutaminyl-tRNA(Gln) + L-glutamate + ADP + phosphate + H(+). The enzyme catalyses L-aspartyl-tRNA(Asn) + L-glutamine + ATP + H2O = L-asparaginyl-tRNA(Asn) + L-glutamate + ADP + phosphate + 2 H(+). Its function is as follows. Allows the formation of correctly charged Asn-tRNA(Asn) or Gln-tRNA(Gln) through the transamidation of misacylated Asp-tRNA(Asn) or Glu-tRNA(Gln) in organisms which lack either or both of asparaginyl-tRNA or glutaminyl-tRNA synthetases. The reaction takes place in the presence of glutamine and ATP through an activated phospho-Asp-tRNA(Asn) or phospho-Glu-tRNA(Gln). This chain is Aspartyl/glutamyl-tRNA(Asn/Gln) amidotransferase subunit B, found in Elusimicrobium minutum (strain Pei191).